Here is a 351-residue protein sequence, read N- to C-terminus: Transmembrane protein 185-like (351 aa).

The next 8 membrane-spanning stretches (helical) occupy residues 16–36 (LIYA…DGII), 41–61 (WAVF…ASVG), 81–101 (FKAM…EVLV), 113–133 (WLLV…ACVW), 154–174 (FIFI…VVCV), 178–198 (ILMS…VLFL), 212–232 (ITMA…EILL), and 244–264 (YVPV…TTFG).

Belongs to the TMEM185 family.

Its subcellular location is the membrane. The sequence is that of Transmembrane protein 185-like from Danio rerio (Zebrafish).